The sequence spans 670 residues: G-protein coupled receptor moody (670 aa).

Residues 1 to 40 (MSDETTISLEDGYPPLEALTTMVPPADATGFSQSLLTFAA) are Extracellular-facing. Residues 41–61 (VMTFLIMIVGICGNLLTVVAL) traverse the membrane as a helical segment. The Cytoplasmic segment spans residues 62–69 (LKCPKVRN). The chain crosses the membrane as a helical span at residues 70–90 (VAAAFIISLCIADLLFCALVL). Over 91 to 111 (PFQGLRFVQGTWRHGQVLCRL) the chain is Extracellular. An intrachain disulfide couples Cys-109 to Cys-188. Residues 112 to 132 (IPFIQYGNIGVSLLCIAMITI) traverse the membrane as a helical segment. Topologically, residues 133 to 152 (NRYVMITHHGLYARIYKRHW) are cytoplasmic. A helical transmembrane segment spans residues 153–173 (IAVMIAACWLFSYGMQLPTLL). Residues 174–202 (GEWGRFGYDSRLQTCSIMTDDHGHSSKTT) lie on the Extracellular side of the membrane. The helical transmembrane segment at 203-223 (LFITAFVIPCLVIIACYAKIF) threads the bilayer. Residues 224-313 (WVVHKSEQRL…AKRNEWRITK (90 aa)) lie on the Cytoplasmic side of the membrane. A disordered region spans residues 258 to 302 (LPSGAECQPSNRVSSDSSSSFSIDVPETAPSGKQQPTRVKDQREV). The span at 267-279 (SNRVSSDSSSSFS) shows a compositional bias: low complexity. The chain crosses the membrane as a helical span at residues 314-334 (MVLAIFLSFVVCYLPITIVKV). The Extracellular portion of the chain corresponds to 335–345 (ADKNVEHPSLH). Residues 346–366 (ICSYILLYLSACINPIIYVIM) form a helical membrane-spanning segment. Residues 367–670 (NKQYRKAYKT…LTAKMKFPKD (304 aa)) are Cytoplasmic-facing. Disordered stretches follow at residues 461–490 (DLIS…GSNS), 562–622 (ELPP…YMNV), and 636–670 (TNAV…FPKD). A compositionally biased stretch (pro residues) spans 564-584 (PPTPPATSAPTTPAPPPPSSP). The segment covering 585-598 (LHPLSTDSSTTTIS) has biased composition (low complexity). Residues 646 to 660 (GPANTSATVSISGSK) are compositionally biased toward polar residues.

It belongs to the G-protein coupled receptor 1 family. As to expression, isoform A and isoform B are expressed in the head. Isoform B only is expressed in the body. Expressed in embryonic glial cells that are involved in ensheathment and insulation of the nervous system. Both isoforms are expressed in glia that insulate the larval and adult nervous system. Also expressed in the germ cells, the gut, and the heart.

It localises to the cell membrane. In terms of biological role, isoform A and isoform B are required in glia to regulate the acute sensitivity to cocaine and to continuously maintain the proper blood-brain barrier (BBB) function. A moody-mediated signaling pathway functions in glia to regulate nervous system insulation and drug-related behaviors. Galphai and Galphao, and the regulator of G protein signaling, loco, are required in the surface glia to achieve effective insulation. The components function by regulating the cortical actin and thereby stabilizing the extended morphology of the surface glia, which in turn is necessary for the formation of septate junctions of sufficient length to achieve proper sealing of the nerve cord. This Drosophila melanogaster (Fruit fly) protein is G-protein coupled receptor moody.